Here is a 104-residue protein sequence, read N- to C-terminus: Ig kappa chain b5 variant C region (104 aa).

Positions 5 to 100 constitute an Ig-like domain; sequence PTVLIFPPSP…SGSPVVQSFS (96 aa). A disulfide bridge connects residues Cys26 and Cys85.

This Oryctolagus cuniculus (Rabbit) protein is Ig kappa chain b5 variant C region.